Here is a 97-residue protein sequence, read N- to C-terminus: Conotoxin Cal6.1a (97 aa).

The first 22 residues, 1–22, serve as a signal peptide directing secretion; that stretch reads MKLTTVLVVALLVLAACQFTVT. Positions 23-46 are disordered; the sequence is DNSGDDPENPSLRSVGENQNPDST. The propeptide occupies 23-68; that stretch reads DNSGDDPENPSLRSVGENQNPDSTKTITAWATRDMTNMRRGLNRPS. 3 disulfides stabilise this stretch: Cys-71–Cys-87, Cys-78–Cys-91, and Cys-86–Cys-96.

It belongs to the conotoxin O1 superfamily. In terms of tissue distribution, expressed by the venom duct.

It is found in the secreted. In terms of biological role, probable neurotoxin with unknown target. Possibly targets ion channels. This chain is Conotoxin Cal6.1a, found in Californiconus californicus (California cone).